The sequence spans 497 residues: Cobyric acid synthase (497 aa).

In terms of domain architecture, GATase cobBQ-type spans glutamate 250–tryptophan 445. Cysteine 331 functions as the Nucleophile in the catalytic mechanism. Histidine 437 is an active-site residue.

It belongs to the CobB/CobQ family. CobQ subfamily.

Its pathway is cofactor biosynthesis; adenosylcobalamin biosynthesis. In terms of biological role, catalyzes amidations at positions B, D, E, and G on adenosylcobyrinic A,C-diamide. NH(2) groups are provided by glutamine, and one molecule of ATP is hydrogenolyzed for each amidation. The polypeptide is Cobyric acid synthase (Acaryochloris marina (strain MBIC 11017)).